The sequence spans 250 residues: Cell division protein ZapD (250 aa).

The protein belongs to the ZapD family. As to quaternary structure, interacts with FtsZ.

Its subcellular location is the cytoplasm. In terms of biological role, cell division factor that enhances FtsZ-ring assembly. Directly interacts with FtsZ and promotes bundling of FtsZ protofilaments, with a reduction in FtsZ GTPase activity. This Yersinia pestis bv. Antiqua (strain Antiqua) protein is Cell division protein ZapD.